The chain runs to 1344 residues: Xanthine dehydrogenase (1344 aa).

Positions 9 to 96 constitute a 2Fe-2S ferredoxin-type domain; that stretch reads SVLVFFVNGK…GCAVTTVEGI (88 aa). Residues cysteine 48, cysteine 53, cysteine 56, cysteine 78, cysteine 118, cysteine 121, cysteine 153, and cysteine 155 each coordinate [2Fe-2S] cluster. Residues 236 to 425 enclose the FAD-binding PCMH-type domain; that stretch reads FSSERVTWYR…LGIHFQKTTP (190 aa). Residues 264 to 271, phenylalanine 344, 354 to 358, aspartate 367, leucine 415, and lysine 433 contribute to the FAD site; these read LVVGNTEV and CLGGN. Mo-molybdopterin contacts are provided by glutamine 781 and phenylalanine 812. Substrate contacts are provided by glutamate 816 and arginine 894. A Mo-molybdopterin-binding site is contributed by arginine 926. Substrate is bound at residue phenylalanine 928. Alanine 1093 contributes to the Mo-molybdopterin binding site. Glutamate 1276 acts as the Proton acceptor in catalysis.

This sequence belongs to the xanthine dehydrogenase family. Homodimer. It depends on FAD as a cofactor. Requires Mo-molybdopterin as cofactor. [2Fe-2S] cluster is required as a cofactor.

The protein localises to the peroxisome. It catalyses the reaction xanthine + NAD(+) + H2O = urate + NADH + H(+). The enzyme catalyses hypoxanthine + NAD(+) + H2O = xanthine + NADH + H(+). Functionally, key enzyme in purine degradation. Catalyzes the oxidation of hypoxanthine to xanthine. Catalyzes the oxidation of xanthine to uric acid. The sequence is that of Xanthine dehydrogenase (Xdh) from Drosophila subobscura (Fruit fly).